We begin with the raw amino-acid sequence, 391 residues long: S-adenosylmethionine synthase 1 (391 aa).

A Mg(2+)-binding site is contributed by Glu-9. Position 15 (His-15) interacts with ATP. Glu-43 lines the K(+) pocket. L-methionine is bound by residues Glu-56 and Gln-99. ATP contacts are provided by residues 167 to 169, 235 to 238, Asp-246, 252 to 253, Ala-269, Lys-273, and Lys-277; these read DGK, SGRF, and RK. Asp-246 lines the L-methionine pocket. Lys-277 is an L-methionine binding site.

It belongs to the AdoMet synthase family. In terms of assembly, homotetramer. The cofactor is Mn(2+). Mg(2+) is required as a cofactor. It depends on Co(2+) as a cofactor. Requires K(+) as cofactor.

Its subcellular location is the cytoplasm. It carries out the reaction L-methionine + ATP + H2O = S-adenosyl-L-methionine + phosphate + diphosphate. Its pathway is amino-acid biosynthesis; S-adenosyl-L-methionine biosynthesis; S-adenosyl-L-methionine from L-methionine: step 1/1. Functionally, catalyzes the formation of S-adenosylmethionine from methionine and ATP. The reaction comprises two steps that are both catalyzed by the same enzyme: formation of S-adenosylmethionine (AdoMet) and triphosphate, and subsequent hydrolysis of the triphosphate. This Vitis vinifera (Grape) protein is S-adenosylmethionine synthase 1 (METK1).